Consider the following 75-residue polypeptide: Translational regulator CsrA (75 aa).

It belongs to the CsrA/RsmA family. As to quaternary structure, homodimer; the beta-strands of each monomer intercalate to form a hydrophobic core, while the alpha-helices form wings that extend away from the core. Interacts with FliW.

It is found in the cytoplasm. Its function is as follows. A translational regulator that binds mRNA to regulate translation initiation and/or mRNA stability. Usually binds in the 5'-UTR at or near the Shine-Dalgarno sequence preventing ribosome-binding, thus repressing translation. Its function is probably anatagonized by FliW. Inhibits translation of flaA mRNA in vitro. Involved in post-transcriptional regulation of flagellin biosynthesis. This Campylobacter jejuni subsp. jejuni serotype O:6 (strain 81116 / NCTC 11828) protein is Translational regulator CsrA.